We begin with the raw amino-acid sequence, 288 residues long: tRNA dimethylallyltransferase (288 aa).

2–9 (GPTAAGKS) contacts ATP. A substrate-binding site is contributed by 4-9 (TAAGKS). Positions 27–30 (DSMQ) are interaction with substrate tRNA.

The protein belongs to the IPP transferase family. As to quaternary structure, monomer. Mg(2+) serves as cofactor.

The catalysed reaction is adenosine(37) in tRNA + dimethylallyl diphosphate = N(6)-dimethylallyladenosine(37) in tRNA + diphosphate. Catalyzes the transfer of a dimethylallyl group onto the adenine at position 37 in tRNAs that read codons beginning with uridine, leading to the formation of N6-(dimethylallyl)adenosine (i(6)A). This Frankia alni (strain DSM 45986 / CECT 9034 / ACN14a) protein is tRNA dimethylallyltransferase.